The primary structure comprises 345 residues: Platelet-derived growth factor C (345 aa).

Positions 1–22 (MLLFGFLLLTFALVSQRQGAEA) are cleaved as a signal peptide. 2 N-linked (GlcNAc...) asparagine glycosylation sites follow: asparagine 25 and asparagine 55. The CUB domain maps to 46 to 163 (HEKIITVSAN…PGFCIHYTLL (118 aa)). 4 disulfide bridges follow: cysteine 104/cysteine 124, cysteine 250/cysteine 294, cysteine 280/cysteine 335, and cysteine 287/cysteine 337.

The protein belongs to the PDGF/VEGF growth factor family. Homodimer; disulfide-linked. Interacts with PDGFRA homodimers, and with heterodimers formed by PDGFRA and PDGFRB. Proteolytic removal of the N-terminal CUB domain releasing the core domain is necessary for unmasking the receptor-binding epitopes of the core domain. Cleavage after basic residues in the hinge region (region connecting the CUB and growth factor domains) gives rise to the receptor-binding form.

It is found in the secreted. In terms of biological role, growth factor that plays an essential role in the regulation of embryonic development, cell proliferation, cell migration, survival and chemotaxis. Potent mitogen and chemoattractant for cells of mesenchymal origin. Required for normal skeleton formation during embryonic development. Required for normal skin morphogenesis during embryonic development. Plays an important role in wound healing, in angiogenesis and blood vessel development. The sequence is that of Platelet-derived growth factor C (PDGFC) from Gekko japonicus (Schlegel's Japanese gecko).